Consider the following 26-residue polypeptide: Acetyl-CoA acetyltransferase (26 aa).

C21 functions as the Acyl-thioester intermediate in the catalytic mechanism.

The protein belongs to the thiolase-like superfamily. Thiolase family. Homotetramer. Succinylation, adjacent to a coenzyme A binding site. Desuccinylated by SIRT5.

Its subcellular location is the mitochondrion. It carries out the reaction 2 acetyl-CoA = acetoacetyl-CoA + CoA. This Sus scrofa (Pig) protein is Acetyl-CoA acetyltransferase.